The following is a 485-amino-acid chain: Terminase, large subunit (485 aa).

ATP is bound by residues Gln97 and Gln99. The short motif at Thr124 to Ser131 is the Walker A motif element. The short motif at Phe145–Glu150 is the Walker B motif element. Residue Glu150 is the For ATPase activity of the active site. Positions Ser256–Tyr438 are nuclease. Mg(2+)-binding residues include Asp294, Asp347, and Asp429.

This sequence belongs to the Tequatrovirus large terminase family. In terms of assembly, interacts with the terminase small subunit; the active complex is probably heterooligomeric. Interacts with the portal protein. Mg(2+) serves as cofactor.

The terminase large subunit acts as an ATP driven molecular motor necessary for viral DNA translocation into empty capsids and as an endonuclease that cuts the viral genome to initiate and to end a packaging reaction The terminase lies at a unique vertex of the procapsid and is composed of two subunits, a small terminase subunit involved in viral DNA recognition (packaging sequence), and a large terminase subunit possessing endonucleolytic and ATPase activities. Both terminase subunits heterooligomerize and are docked on the portal protein to form the packaging machine. The terminase large subunit exhibits endonuclease activity and cleaves the viral genome concatemer. Once the capsid is packaged with the DNA, the terminase complex is substituted by the tail. The chain is Terminase, large subunit from Thermus thermophilus (Thermus thermophilus phage G20c).